A 391-amino-acid chain; its full sequence is Nutrient and stress factor 1 (391 aa).

The segment covering 1–27 has biased composition (polar residues); the sequence is MENTTNRNTAGVLTSSNGNFATNSVAA. The tract at residues 1–37 is disordered; that stretch reads MENTTNRNTAGVLTSSNGNFATNSVAASTPKRSKSAR. C2H2-type zinc fingers lie at residues 41–66 and 72–95; these read FKCT…IRKH and FQCP…ESVH. The segment at 91 to 149 is disordered; the sequence is RESVHAHKNHHSTSSHQRKPSSSSLSSSSSASSSSSASSSTSYSDPYRKTNINSGNMPM. Over residues 96–109 the composition is skewed to basic residues; sequence AHKNHHSTSSHQRK. The span at 110 to 134 shows a compositional bias: low complexity; sequence PSSSSLSSSSSASSSSSASSSTSYS. Phosphoserine occurs at positions 162 and 163. The tract at residues 326–374 is disordered; that stretch reads AFSQPPNGNKNNNMSSSKNGGKGGENFKNTDDRNDNNNKKRSETLSESD. The span at 332–344 shows a compositional bias: low complexity; that stretch reads NGNKNNNMSSSKN. A compositionally biased stretch (basic and acidic residues) spans 353–369; it reads KNTDDRNDNNNKKRSET.

It localises to the nucleus. Transcription factor that participates in the transcriptional activation of glucose-repressed genes during exponential growth in non-fermentable carbon conditions. Also involved in salt-stress response. The chain is Nutrient and stress factor 1 (USV1) from Saccharomyces cerevisiae (strain ATCC 204508 / S288c) (Baker's yeast).